The primary structure comprises 344 residues: Phenylalanine--tRNA ligase alpha subunit (344 aa).

Glu255 is a binding site for Mg(2+).

The protein belongs to the class-II aminoacyl-tRNA synthetase family. Phe-tRNA synthetase alpha subunit type 1 subfamily. As to quaternary structure, tetramer of two alpha and two beta subunits. Mg(2+) is required as a cofactor.

Its subcellular location is the cytoplasm. It catalyses the reaction tRNA(Phe) + L-phenylalanine + ATP = L-phenylalanyl-tRNA(Phe) + AMP + diphosphate + H(+). This chain is Phenylalanine--tRNA ligase alpha subunit, found in Sulfurihydrogenibium sp. (strain YO3AOP1).